The sequence spans 193 residues: Probable gluconokinase (193 aa).

21–28 (GPAGSGKT) is a binding site for ATP.

This sequence belongs to the gluconokinase GntK/GntV family.

It catalyses the reaction D-gluconate + ATP = 6-phospho-D-gluconate + ADP + H(+). It participates in carbohydrate acid metabolism; D-gluconate degradation. This chain is Probable gluconokinase, found in Schizosaccharomyces pombe (strain 972 / ATCC 24843) (Fission yeast).